Here is a 180-residue protein sequence, read N- to C-terminus: Non-structural protein 4 (180 aa).

A run of 2 helical transmembrane segments spans residues 16-36 (VCVHKMTLLIILIISAAVTVI) and 52-72 (IVSTITDGINATIISVMAILG).

It is found in the host membrane. The sequence is that of Non-structural protein 4 (Segment-11) from Banna virus (BAV).